Reading from the N-terminus, the 231-residue chain is Fibrillarin-like rRNA/tRNA 2'-O-methyltransferase (231 aa).

Residues 89–90, 108–109, 133–134, and 153–156 contribute to the S-adenosyl-L-methionine site; these read TT, EF, DA, and DIAQ.

Belongs to the methyltransferase superfamily. Fibrillarin family. In terms of assembly, interacts with nop5. Component of box C/D small ribonucleoprotein (sRNP) particles that contain rpl7ae, FlpA and nop5, plus a guide RNA.

Involved in pre-rRNA and tRNA processing. Utilizes the methyl donor S-adenosyl-L-methionine to catalyze the site-specific 2'-hydroxyl methylation of ribose moieties in rRNA and tRNA. Site specificity is provided by a guide RNA that base pairs with the substrate. Methylation occurs at a characteristic distance from the sequence involved in base pairing with the guide RNA. The sequence is that of Fibrillarin-like rRNA/tRNA 2'-O-methyltransferase from Sulfolobus acidocaldarius (strain ATCC 33909 / DSM 639 / JCM 8929 / NBRC 15157 / NCIMB 11770).